The following is a 37-amino-acid chain: Mu-thomitoxin-Hme1a (37 aa).

Cystine bridges form between Cys-2–Cys-18, Cys-9–Cys-22, and Cys-17–Cys-33. Phe-37 is subject to Phenylalanine amide.

It belongs to the neurotoxin 01 (U2-agtx) family. Post-translationally, contains 3 disulfide bonds. Expressed by the venom gland.

Its subcellular location is the secreted. Its function is as follows. Blocks the Nav1.2/SCN2A, Nav1.4/SCN4A, and Nav1.6/SCN8A sodium channels. Reduces the peak amplitude of the sodium current and negatively shifts the steady-state inactivation process. Does not shift the threshold potential of activation or the voltage corresponding to maximal current. Does not change the reversal potential of the sodium current. May act on site 1 of the receptor. The polypeptide is Mu-thomitoxin-Hme1a (Heriaeus mellotteei (Crab spider)).